The chain runs to 775 residues: Subtilisin-like protease SBT3.8 (775 aa).

Residues 1-26 (MKSCRTLIFVAIILNGLSTFVAHAGA) form the signal peptide. Residues 27-109 (ESKVHIVYLG…VTPDSFYQLD (83 aa)) constitute a propeptide, activation peptide. Positions 30–108 (VHIVYLGEKQ…HVTPDSFYQL (79 aa)) constitute an Inhibitor I9 domain. Positions 113–622 (TWDYLGLSVA…GGLVNPEKAA (510 aa)) constitute a Peptidase S8 domain. Asparagine 129 carries an N-linked (GlcNAc...) asparagine glycan. The active-site Charge relay system is aspartate 143. 2 N-linked (GlcNAc...) asparagine glycosylation sites follow: asparagine 174 and asparagine 202. Histidine 218 serves as the catalytic Charge relay system. The PA domain maps to 384–476 (SLVYPENPGN…VDYELGTDIL (93 aa)). N-linked (GlcNAc...) asparagine glycans are attached at residues asparagine 395, asparagine 410, and asparagine 538. Serine 553 functions as the Charge relay system in the catalytic mechanism. N-linked (GlcNAc...) asparagine glycans are attached at residues asparagine 645, asparagine 721, and asparagine 756.

This sequence belongs to the peptidase S8 family.

Its subcellular location is the secreted. In Arabidopsis thaliana (Mouse-ear cress), this protein is Subtilisin-like protease SBT3.8.